A 458-amino-acid chain; its full sequence is Phosphomethylpyrimidine synthase (458 aa).

Substrate-binding positions include Asn80, Met109, Tyr139, His175, 195-197 (SRG), 236-239 (DSLR), and Glu275. His279 lines the Zn(2+) pocket. Residue Tyr302 participates in substrate binding. Zn(2+) is bound at residue His343. [4Fe-4S] cluster is bound by residues Cys423, Cys426, and Cys431.

It belongs to the ThiC family. It depends on [4Fe-4S] cluster as a cofactor.

It carries out the reaction 5-amino-1-(5-phospho-beta-D-ribosyl)imidazole + S-adenosyl-L-methionine = 4-amino-2-methyl-5-(phosphooxymethyl)pyrimidine + CO + 5'-deoxyadenosine + formate + L-methionine + 3 H(+). It functions in the pathway cofactor biosynthesis; thiamine diphosphate biosynthesis. Catalyzes the synthesis of the hydroxymethylpyrimidine phosphate (HMP-P) moiety of thiamine from aminoimidazole ribotide (AIR) in a radical S-adenosyl-L-methionine (SAM)-dependent reaction. This is Phosphomethylpyrimidine synthase from Cyanothece sp. (strain PCC 7425 / ATCC 29141).